Consider the following 224-residue polypeptide: Phosphoglycolate phosphatase (224 aa).

The Nucleophile role is filled by Asp11. Mg(2+) contacts are provided by Asp11, Asp13, and Asp177.

This sequence belongs to the HAD-like hydrolase superfamily. CbbY/CbbZ/Gph/YieH family. Mg(2+) serves as cofactor.

The enzyme catalyses 2-phosphoglycolate + H2O = glycolate + phosphate. Its pathway is organic acid metabolism; glycolate biosynthesis; glycolate from 2-phosphoglycolate: step 1/1. Specifically catalyzes the dephosphorylation of 2-phosphoglycolate. Is involved in the dissimilation of the intracellular 2-phosphoglycolate formed during the DNA repair of 3'-phosphoglycolate ends, a major class of DNA lesions induced by oxidative stress. The protein is Phosphoglycolate phosphatase of Mannheimia succiniciproducens (strain KCTC 0769BP / MBEL55E).